Consider the following 153-residue polypeptide: 3-hydroxyacyl-[acyl-carrier-protein] dehydratase FabZ (153 aa).

The active site involves His47.

Belongs to the thioester dehydratase family. FabZ subfamily.

It localises to the cytoplasm. The catalysed reaction is a (3R)-hydroxyacyl-[ACP] = a (2E)-enoyl-[ACP] + H2O. Its function is as follows. Involved in unsaturated fatty acids biosynthesis. Catalyzes the dehydration of short chain beta-hydroxyacyl-ACPs and long chain saturated and unsaturated beta-hydroxyacyl-ACPs. The protein is 3-hydroxyacyl-[acyl-carrier-protein] dehydratase FabZ of Myxococcus xanthus (strain DK1622).